Here is a 113-residue protein sequence, read N- to C-terminus: U11-theraphotoxin-Hhn1a (113 aa).

The signal sequence occupies residues 1-21 (MNTVRVTFLLVFVLAVSLGQA). A propeptide spanning residues 22–74 (DKDENRMEMQEKTEQGKSYLDFAENLLLQKLEELEAKLLEEDSEESRNSRQKR) is cleaved from the precursor. The disordered stretch occupies residues 61–83 (EEDSEESRNSRQKRCIGEGVPCD). Disulfide bonds link C75–C90, C82–C95, and C89–C110.

The protein belongs to the neurotoxin 14 (magi-1) family. 01 (HNTX-16) subfamily. As to expression, expressed by the venom gland.

Its subcellular location is the secreted. Functionally, probable ion channel inhibitor. This chain is U11-theraphotoxin-Hhn1a, found in Cyriopagopus hainanus (Chinese bird spider).